A 242-amino-acid chain; its full sequence is Ribosomal RNA small subunit methyltransferase G (242 aa).

Residues glycine 78, phenylalanine 83, 129–130 (AE), and arginine 148 each bind S-adenosyl-L-methionine. The segment at 221–242 (TKKRYPRKAGVPEKSPIGGKHD) is disordered.

It belongs to the methyltransferase superfamily. RNA methyltransferase RsmG family.

Its subcellular location is the cytoplasm. Specifically methylates the N7 position of a guanine in 16S rRNA. This Oenococcus oeni (strain ATCC BAA-331 / PSU-1) protein is Ribosomal RNA small subunit methyltransferase G.